The primary structure comprises 156 residues: Ribosomal RNA large subunit methyltransferase H (156 aa).

S-adenosyl-L-methionine is bound by residues Leu-73, Gly-104, and Leu-123–Met-128.

The protein belongs to the RNA methyltransferase RlmH family. In terms of assembly, homodimer.

The protein resides in the cytoplasm. The catalysed reaction is pseudouridine(1915) in 23S rRNA + S-adenosyl-L-methionine = N(3)-methylpseudouridine(1915) in 23S rRNA + S-adenosyl-L-homocysteine + H(+). Its function is as follows. Specifically methylates the pseudouridine at position 1915 (m3Psi1915) in 23S rRNA. The chain is Ribosomal RNA large subunit methyltransferase H from Tolumonas auensis (strain DSM 9187 / NBRC 110442 / TA 4).